The following is a 1337-amino-acid chain: Nucleoporin POM152 (1337 aa).

Positions 1–48 are disordered; that stretch reads MEHRYNVFNDTPRGNHWMGSSVSGSPRPSYSSRPNVNTTRRFQYSDDE. The Cytoplasmic portion of the chain corresponds to 1 to 110; it reads MEHRYNVFND…TDVLEISKQR (110 aa). The segment at 1 to 175 is pore side; it reads MEHRYNVFND…SFNIPRLTFK (175 aa). Over residues 19–37 the composition is skewed to low complexity; it reads GSSVSGSPRPSYSSRPNVN. Residues Ser45 and Ser60 each carry the phosphoserine modification. Residues 111-131 form a helical membrane-spanning segment; it reads TFAVILFLIIQCYKIYDLVIL. The Perinuclear space portion of the chain corresponds to 132 to 148; the sequence is KSGLPLSGLLFKNYRFN. A helical transmembrane segment spans residues 149–169; that stretch reads FISKYFIIDSFFLYVLPSFNI. Over 170–172 the chain is Cytoplasmic; the sequence is PRL. Residues 173–193 form a helical membrane-spanning segment; that stretch reads TFKPWVVYLQILAMLLLNIFI. The Perinuclear space portion of the chain corresponds to 194–1337; it reads SSDHEFVLIS…FAKNDLFFNN (1144 aa). Residues 196-1337 are cisternal side; the sequence is DHEFVLISLI…FAKNDLFFNN (1142 aa). An N-linked (GlcNAc...) asparagine glycan is attached at Asn280. Tandem repeats lie at residues 390 to 413, 626 to 650, 732 to 755, 836 to 859, 943 to 966, 1058 to 1077, 1157 to 1178, and 1253 to 1276. The tract at residues 390 to 1276 is 8 X 24 AA approximate repeats; the sequence is DRCIGDSDNV…EGTPPFSLTY (887 aa).

In terms of assembly, component of the nuclear pore complex (NPC). NPC constitutes the exclusive means of nucleocytoplasmic transport. NPCs allow the passive diffusion of ions and small molecules and the active, nuclear transport receptor-mediated bidirectional transport of macromolecules such as proteins, RNAs, ribonucleoparticles (RNPs), and ribosomal subunits across the nuclear envelope. Due to its 8-fold rotational symmetry, all subunits are present with 8 copies or multiples thereof. Interacts with NUP188. Post-translationally, the N-terminus is blocked. In terms of processing, phosphorylated by CDC28.

It is found in the nucleus. It localises to the nuclear pore complex. Its subcellular location is the nucleus membrane. Its function is as follows. Functions as a component of the nuclear pore complex (NPC). NPC components, collectively referred to as nucleoporins (NUPs), can play the role of both NPC structural components and of docking or interaction partners for transiently associated nuclear transport factors. POM152 is important for the de novo assembly of NPCs. This Saccharomyces cerevisiae (strain ATCC 204508 / S288c) (Baker's yeast) protein is Nucleoporin POM152 (POM152).